An 89-amino-acid polypeptide reads, in one-letter code: uncharacterized protein (89 aa).

Residues 67–86 (VYLSSMYICFILLAIWMTVW) form a helical membrane-spanning segment.

It localises to the membrane. This is an uncharacterized protein from Bacillus subtilis (strain 168).